A 491-amino-acid polypeptide reads, in one-letter code: UDP-N-acetylmuramate--L-alanine ligase (491 aa).

Position 126–132 (Gly-126–Thr-132) interacts with ATP.

It belongs to the MurCDEF family.

The protein resides in the cytoplasm. The enzyme catalyses UDP-N-acetyl-alpha-D-muramate + L-alanine + ATP = UDP-N-acetyl-alpha-D-muramoyl-L-alanine + ADP + phosphate + H(+). Its pathway is cell wall biogenesis; peptidoglycan biosynthesis. In terms of biological role, cell wall formation. This chain is UDP-N-acetylmuramate--L-alanine ligase, found in Shigella boydii serotype 18 (strain CDC 3083-94 / BS512).